We begin with the raw amino-acid sequence, 547 residues long: CTP synthase (547 aa).

An amidoligase domain region spans residues 1-266 (MTKYIFVTGG…GDYLVERLGL (266 aa)). S13 is a CTP binding site. S13 contributes to the UTP binding site. 14 to 19 (SVGKGI) provides a ligand contact to ATP. Y54 serves as a coordination point for L-glutamine. Residue D71 coordinates ATP. Positions 71 and 141 each coordinate Mg(2+). CTP is bound by residues 148-150 (DIE), 187-192 (KTKPTQ), and K223. UTP-binding positions include 187 to 192 (KTKPTQ) and K223. Residues 291-533 (PIALVGKYVE…IAAAAQTLLA (243 aa)) enclose the Glutamine amidotransferase type-1 domain. Residue G353 participates in L-glutamine binding. The Nucleophile; for glutamine hydrolysis role is filled by C380. L-glutamine is bound by residues 381–384 (LGMQ), E404, and R461. Residues H506 and E508 contribute to the active site.

It belongs to the CTP synthase family. As to quaternary structure, homotetramer.

The enzyme catalyses UTP + L-glutamine + ATP + H2O = CTP + L-glutamate + ADP + phosphate + 2 H(+). The catalysed reaction is L-glutamine + H2O = L-glutamate + NH4(+). It carries out the reaction UTP + NH4(+) + ATP = CTP + ADP + phosphate + 2 H(+). Its pathway is pyrimidine metabolism; CTP biosynthesis via de novo pathway; CTP from UDP: step 2/2. With respect to regulation, allosterically activated by GTP, when glutamine is the substrate; GTP has no effect on the reaction when ammonia is the substrate. The allosteric effector GTP functions by stabilizing the protein conformation that binds the tetrahedral intermediate(s) formed during glutamine hydrolysis. Inhibited by the product CTP, via allosteric rather than competitive inhibition. Its function is as follows. Catalyzes the ATP-dependent amination of UTP to CTP with either L-glutamine or ammonia as the source of nitrogen. Regulates intracellular CTP levels through interactions with the four ribonucleotide triphosphates. This is CTP synthase from Chloroflexus aggregans (strain MD-66 / DSM 9485).